The sequence spans 244 residues: Large ribosomal subunit protein uL3 (244 aa).

This sequence belongs to the universal ribosomal protein uL3 family. As to quaternary structure, part of the 50S ribosomal subunit. Forms a cluster with proteins L14 and L19.

One of the primary rRNA binding proteins, it binds directly near the 3'-end of the 23S rRNA, where it nucleates assembly of the 50S subunit. This Aquifex pyrophilus protein is Large ribosomal subunit protein uL3.